Consider the following 778-residue polypeptide: Zinc finger protein 749 (778 aa).

A KRAB domain is found at 8 to 101; it reads MVFEDVAIYF…ILKDILHLAE (94 aa). The C2H2-type 1; degenerate zinc finger occupies 152–174; it reads FTCTQGGKDFTASSDLLQQQVLN. The C2H2-type 2; degenerate zinc finger occupies 196 to 218; sequence FNSSQGGKDFCHQHGLFEHQKTH. The segment at 224–246 adopts a C2H2-type 3; degenerate zinc-finger fold; the sequence is YEFSECGELFRYNSNLIKYQQNH. The segment at 252–274 adopts a C2H2-type 4; degenerate zinc-finger fold; it reads YEGTEYGKTFIRKSNLVQHQKIH. 6 C2H2-type zinc fingers span residues 298-320, 326-348, 354-376, 382-404, 410-432, and 438-460; these read YECT…QKTH, YECN…QKVH, YECS…QRVH, FECS…QRVH, YKCS…LKIH, and YECT…QKIH. Residue Lys466 is modified to N6-acetyllysine. C2H2-type zinc fingers lie at residues 483–505 and 511–533; these read YTCS…QKIH and YECT…EKIH. Residue Lys539 is modified to N6-acetyllysine. The C2H2-type 13; degenerate zinc finger occupies 556–578; that stretch reads YVCSECGKAFLTQAHLDGHQKIQ. 3 C2H2-type zinc fingers span residues 584 to 606, 612 to 634, and 640 to 662; these read YECN…QRIH, YKCS…QKVH, and YECS…QRVH. The C2H2-type 17; atypical zinc-finger motif lies at 668-690; it reads YECSNCGKFLRYRSTFIKHHKVC. The segment at 696 to 718 adopts a C2H2-type 18 zinc-finger fold; sequence HECSKCRELFRTKSSLIIHQQSH. A C2H2-type 19; degenerate zinc finger spans residues 751 to 773; that stretch reads YECGESSKVFKYNSSLIKHQIIH. Glycyl lysine isopeptide (Lys-Gly) (interchain with G-Cter in SUMO2) cross-links involve residues Lys761 and Lys768.

This sequence belongs to the krueppel C2H2-type zinc-finger protein family.

It is found in the nucleus. Its function is as follows. May be involved in transcriptional regulation. In Homo sapiens (Human), this protein is Zinc finger protein 749 (ZNF749).